We begin with the raw amino-acid sequence, 153 residues long: MTPEVVIYTDGACSGNPGPGGWGAILIHGEREKELCGGEAATTNNRMELMAAIQALEALKRPCRVELHTDSQYVQKGIHEWIHGWKKRGWLTADKKPVKNDDLWKRLDAARLRHHVDWRWVKGHAGHELNERADALARKGLSEAAAARAAGGA.

One can recognise an RNase H type-1 domain in the interval 1–142 (MTPEVVIYTD…ADALARKGLS (142 aa)). Residues Asp-10, Glu-48, Asp-70, and Asp-134 each coordinate Mg(2+).

Belongs to the RNase H family. As to quaternary structure, monomer. The cofactor is Mg(2+).

Its subcellular location is the cytoplasm. It catalyses the reaction Endonucleolytic cleavage to 5'-phosphomonoester.. In terms of biological role, endonuclease that specifically degrades the RNA of RNA-DNA hybrids. This Phenylobacterium zucineum (strain HLK1) protein is Ribonuclease H.